The following is a 416-amino-acid chain: Floricaula/leafy homolog 2 (416 aa).

The disordered stretch occupies residues 154–237; the sequence is EGLSEEPVQQ…DASGGISERQ (84 aa). Over residues 210–225 the composition is skewed to acidic residues; sequence AEEDEETEEGQEDDWN. 3 DNA-binding regions span residues 238–242, 307–314, and 378–381; these read REHPF, NKPKMRHY, and YVPT.

It belongs to the FLO/LFY family. As to expression, expressed in floral meristems and in indeterminate vegetative meristems.

It is found in the nucleus. In terms of biological role, probable transcription factor that act to specify determinacy in the progenitor cells for both flowers and leaves. The chain is Floricaula/leafy homolog 2 (FL2) from Nicotiana tabacum (Common tobacco).